The primary structure comprises 850 residues: Probable beta-glucosidase J (850 aa).

N-linked (GlcNAc...) asparagine glycosylation is found at asparagine 43 and asparagine 52. The active site involves aspartate 254. In terms of domain architecture, PA14 spans threonine 423–valine 583. Residue asparagine 508 is glycosylated (N-linked (GlcNAc...) asparagine).

This sequence belongs to the glycosyl hydrolase 3 family.

Its subcellular location is the secreted. The catalysed reaction is Hydrolysis of terminal, non-reducing beta-D-glucosyl residues with release of beta-D-glucose.. The protein operates within glycan metabolism; cellulose degradation. Functionally, beta-glucosidases are one of a number of cellulolytic enzymes involved in the degradation of cellulosic biomass. Catalyzes the last step releasing glucose from the inhibitory cellobiose. The protein is Probable beta-glucosidase J (bglJ) of Emericella nidulans (strain FGSC A4 / ATCC 38163 / CBS 112.46 / NRRL 194 / M139) (Aspergillus nidulans).